The sequence spans 530 residues: Berberine bridge enzyme-like 22 (530 aa).

The N-terminal stretch at Met-1–Ser-22 is a signal peptide. Cys-32 and Cys-99 are joined by a disulfide. N-linked (GlcNAc...) asparagine glycosylation is found at Asn-39, Asn-47, Asn-68, Asn-75, Asn-141, and Asn-486. Residues Thr-77–Val-251 enclose the FAD-binding PCMH-type domain. Positions His-114–Cys-176 form a cross-link, 6-(S-cysteinyl)-8alpha-(pros-histidyl)-FAD (His-Cys).

Belongs to the oxygen-dependent FAD-linked oxidoreductase family. The cofactor is FAD. The FAD cofactor is bound via a bicovalent 6-S-cysteinyl, 8alpha-N1-histidyl FAD linkage. As to expression, accumulates in cell walls of etiolated hypocotyls.

The protein resides in the secreted. The protein localises to the cell wall. In Arabidopsis thaliana (Mouse-ear cress), this protein is Berberine bridge enzyme-like 22.